The following is a 217-amino-acid chain: Small ribosomal subunit protein uS3 (217 aa).

The KH type-2 domain maps to 38–106 (IRKFIDNELK…KVHINVIEIK (69 aa)).

The protein belongs to the universal ribosomal protein uS3 family. In terms of assembly, part of the 30S ribosomal subunit. Forms a tight complex with proteins S10 and S14.

Its function is as follows. Binds the lower part of the 30S subunit head. Binds mRNA in the 70S ribosome, positioning it for translation. The polypeptide is Small ribosomal subunit protein uS3 (Staphylococcus epidermidis (strain ATCC 35984 / DSM 28319 / BCRC 17069 / CCUG 31568 / BM 3577 / RP62A)).